The sequence spans 534 residues: Peptide chain release factor 3 (534 aa).

The tr-type G domain occupies 9–278 (SRRRTFAIIS…FFVEHAPPPQ (270 aa)). GTP-binding positions include 18 to 25 (SHPDAGKT), 86 to 90 (DTPGH), and 140 to 143 (NKLD).

It belongs to the TRAFAC class translation factor GTPase superfamily. Classic translation factor GTPase family. PrfC subfamily.

The protein localises to the cytoplasm. In terms of biological role, increases the formation of ribosomal termination complexes and stimulates activities of RF-1 and RF-2. It binds guanine nucleotides and has strong preference for UGA stop codons. It may interact directly with the ribosome. The stimulation of RF-1 and RF-2 is significantly reduced by GTP and GDP, but not by GMP. This chain is Peptide chain release factor 3, found in Stenotrophomonas maltophilia (strain R551-3).